Here is a 106-residue protein sequence, read N- to C-terminus: ATP-dependent Clp protease adapter protein ClpS (106 aa).

This sequence belongs to the ClpS family. In terms of assembly, binds to the N-terminal domain of the chaperone ClpA.

Functionally, involved in the modulation of the specificity of the ClpAP-mediated ATP-dependent protein degradation. The polypeptide is ATP-dependent Clp protease adapter protein ClpS (Vibrio campbellii (strain ATCC BAA-1116)).